A 465-amino-acid chain; its full sequence is A-type ATP synthase subunit B (465 aa).

It belongs to the ATPase alpha/beta chains family. As to quaternary structure, has multiple subunits with at least A(3), B(3), C, D, E, F, H, I and proteolipid K(x).

The protein localises to the cell membrane. Component of the A-type ATP synthase that produces ATP from ADP in the presence of a proton gradient across the membrane. The B chain is a regulatory subunit. The polypeptide is A-type ATP synthase subunit B (Sulfurisphaera tokodaii (strain DSM 16993 / JCM 10545 / NBRC 100140 / 7) (Sulfolobus tokodaii)).